A 196-amino-acid chain; its full sequence is HTH-type transcriptional regulator Hpr (196 aa).

The region spanning Ser13–Gly157 is the HTH marR-type domain. Residues Ile63–Ala86 constitute a DNA-binding region (H-T-H motif).

As to quaternary structure, homodimer.

Its function is as follows. Negative regulator of protease production and sporulation. The protein is HTH-type transcriptional regulator Hpr of Shouchella clausii (strain KSM-K16) (Alkalihalobacillus clausii).